Reading from the N-terminus, the 211-residue chain is Dephospho-CoA kinase (211 aa).

The DPCK domain maps to 3 to 206 (VLGLTGGIGS…PGMKGPDPHA (204 aa)). Position 11-16 (11-16 (GSGKSI)) interacts with ATP.

This sequence belongs to the CoaE family.

It is found in the cytoplasm. The enzyme catalyses 3'-dephospho-CoA + ATP = ADP + CoA + H(+). Its pathway is cofactor biosynthesis; coenzyme A biosynthesis; CoA from (R)-pantothenate: step 5/5. Its function is as follows. Catalyzes the phosphorylation of the 3'-hydroxyl group of dephosphocoenzyme A to form coenzyme A. In Syntrophotalea carbinolica (strain DSM 2380 / NBRC 103641 / GraBd1) (Pelobacter carbinolicus), this protein is Dephospho-CoA kinase.